The primary structure comprises 225 residues: UPF0758 protein BP1235 (225 aa).

An MPN domain is found at 103–225; the sequence is ALANPDLVRR…TVSMAAQGHL (123 aa). The Zn(2+) site is built by His-174, His-176, and Asp-187. The JAMM motif signature appears at 174-187; it reads HNHPGGTAAASAAD.

This sequence belongs to the UPF0758 family.

This Bordetella pertussis (strain Tohama I / ATCC BAA-589 / NCTC 13251) protein is UPF0758 protein BP1235.